The chain runs to 101 residues: Small ribosomal subunit protein uS14 (101 aa).

Belongs to the universal ribosomal protein uS14 family. As to quaternary structure, part of the 30S ribosomal subunit. Contacts proteins S3 and S10.

Functionally, binds 16S rRNA, required for the assembly of 30S particles and may also be responsible for determining the conformation of the 16S rRNA at the A site. This Delftia acidovorans (strain DSM 14801 / SPH-1) protein is Small ribosomal subunit protein uS14.